The chain runs to 1018 residues: Serine/threonine-protein kinase 31 (1018 aa).

One can recognise a Tudor domain in the interval 78–137 (NLDPKKIYGGLFSEDKCWYRCKVLKTISDDKCLVRYIDYGNTEILNRSDIVEIPPELQFS). Positions 298–358 (AKIKQDQKLI…TKHLESTLKT (61 aa)) form a coiled coil. The region spanning 711 to 1018 (IGLLKYMNSG…EKTRNGEANP (308 aa)) is the Protein kinase domain. Residues 717 to 725 (MNSGGLLTM) and Lys738 contribute to the ATP site. Residues 988 to 1018 (IECTQHSREDESKMESLDRYSEKTRNGEANP) are disordered.

It belongs to the protein kinase superfamily. Ser/Thr protein kinase family. In terms of tissue distribution, testis specific. Expressed only in male germ cells.

The catalysed reaction is L-seryl-[protein] + ATP = O-phospho-L-seryl-[protein] + ADP + H(+). It carries out the reaction L-threonyl-[protein] + ATP = O-phospho-L-threonyl-[protein] + ADP + H(+). This Mus musculus (Mouse) protein is Serine/threonine-protein kinase 31 (Stk31).